Reading from the N-terminus, the 201-residue chain is RILP-like protein 2 (201 aa).

Residues serine 14 to glycine 108 form the RH1 domain. A coiled-coil region spans residues leucine 67–serine 155. The region spanning arginine 121–glutamine 197 is the RH2 domain. The segment at threonine 175–threonine 201 is disordered.

This sequence belongs to the RILPL family.

The protein resides in the cytoplasm. It localises to the cytosol. Its subcellular location is the cytoskeleton. The protein localises to the microtubule organizing center. It is found in the centrosome. The protein resides in the cell projection. It localises to the cilium. In terms of biological role, involved in cell shape and neuronal morphogenesis, positively regulating the establishment and maintenance of dendritic spines. Plays a role in cellular protein transport. This chain is RILP-like protein 2 (rilpl2), found in Xenopus laevis (African clawed frog).